We begin with the raw amino-acid sequence, 83 residues long: Large ribosomal subunit protein bL27 (83 aa).

This sequence belongs to the bacterial ribosomal protein bL27 family.

The polypeptide is Large ribosomal subunit protein bL27 (Treponema denticola (strain ATCC 35405 / DSM 14222 / CIP 103919 / JCM 8153 / KCTC 15104)).